Reading from the N-terminus, the 274-residue chain is Undecaprenyl-diphosphatase (274 aa).

The next 6 membrane-spanning stretches (helical) occupy residues 44–64, 85–105, 109–129, 185–205, 214–234, and 247–267; these read AKVF…LVYW, LNVV…GKMI, LFIP…ILWA, ATDF…AYSL, VADI…AWLC, and FIPF…TAWT.

It belongs to the UppP family.

Its subcellular location is the cell inner membrane. The enzyme catalyses di-trans,octa-cis-undecaprenyl diphosphate + H2O = di-trans,octa-cis-undecaprenyl phosphate + phosphate + H(+). Catalyzes the dephosphorylation of undecaprenyl diphosphate (UPP). Confers resistance to bacitracin. The chain is Undecaprenyl-diphosphatase from Variovorax paradoxus (strain S110).